Reading from the N-terminus, the 181-residue chain is Ribosome maturation factor RimM (181 aa).

The PRC barrel domain occupies 100 to 177; it reads EEGFYWMQLI…QIQVDWQLED (78 aa).

It belongs to the RimM family. In terms of assembly, binds ribosomal protein uS19.

It is found in the cytoplasm. An accessory protein needed during the final step in the assembly of 30S ribosomal subunit, possibly for assembly of the head region. Essential for efficient processing of 16S rRNA. May be needed both before and after RbfA during the maturation of 16S rRNA. It has affinity for free ribosomal 30S subunits but not for 70S ribosomes. The protein is Ribosome maturation factor RimM of Hydrogenovibrio crunogenus (strain DSM 25203 / XCL-2) (Thiomicrospira crunogena).